The sequence spans 437 residues: Branched-chain amino acid transport system 3 carrier protein (437 aa).

The next 12 helical transmembrane spans lie at 9–29, 40–60, 79–99, 120–140, 155–175, 189–209, 226–246, 277–297, 316–336, 342–362, 369–389, and 399–419; these read ILAL…IIFP, VWLA…ITVI, YAGG…FAIP, ALFV…LYPG, ILAL…PIGT, FVNG…IVIV, YAIV…VSLF, LGSS…AVGL, LVII…TKLI, VLTA…CIGL, ILAP…LKAA, and LLHL…VATL.

It belongs to the branched chain amino acid transporter family.

The protein resides in the cell inner membrane. In terms of biological role, component of the LIV-III transport system for branched-chain amino acids. BraZ is specific for isoleucine and valine. The LIV-III transport system may be H(+)-coupled. The chain is Branched-chain amino acid transport system 3 carrier protein (braZ) from Pseudomonas aeruginosa (strain ATCC 15692 / DSM 22644 / CIP 104116 / JCM 14847 / LMG 12228 / 1C / PRS 101 / PAO1).